We begin with the raw amino-acid sequence, 138 residues long: Phospholipase A2 group V (138 aa).

The N-terminal stretch at methionine 1 to glycine 20 is a signal peptide. Disulfide bonds link cysteine 46–cysteine 137, cysteine 48–cysteine 64, cysteine 63–cysteine 117, cysteine 70–cysteine 110, cysteine 79–cysteine 103, and cysteine 97–cysteine 108. 3 residues coordinate Ca(2+): tyrosine 47, glycine 49, and glycine 51. The active site involves histidine 67. Aspartate 68 contributes to the Ca(2+) binding site. Aspartate 111 is a catalytic residue.

Belongs to the phospholipase A2 family. The cofactor is Ca(2+). Post-translationally, this enzyme lacks one of the seven disulfide bonds found in similar PLA2 proteins. As to expression, heart, placenta and less abundantly, in lung. Detected in the outer and inner plexiform layers of the retina (at protein level). Expressed in monocytes and macrophages.

Its subcellular location is the secreted. It is found in the cell membrane. It localises to the cytoplasmic vesicle. The protein localises to the phagosome. The protein resides in the recycling endosome. Its subcellular location is the golgi apparatus. It is found in the cis-Golgi network. It localises to the trans-Golgi network. It catalyses the reaction a 1,2-diacyl-sn-glycero-3-phosphocholine + H2O = a 1-acyl-sn-glycero-3-phosphocholine + a fatty acid + H(+). It carries out the reaction 1-hexadecanoyl-2-(9Z-octadecenoyl)-sn-glycero-3-phosphocholine + H2O = 1-hexadecanoyl-sn-glycero-3-phosphocholine + (9Z)-octadecenoate + H(+). The catalysed reaction is 1-hexadecanoyl-2-(5Z,8Z,11Z,14Z-eicosatetraenoyl)-sn-glycero-3-phosphocholine + H2O = 1-hexadecanoyl-sn-glycero-3-phosphocholine + (5Z,8Z,11Z,14Z)-eicosatetraenoate + H(+). The enzyme catalyses 1-hexadecanoyl-2-(9Z,12Z-octadecadienoyl)-sn-glycero-3-phosphoethanolamine + H2O = 1-hexadecanoyl-sn-glycero-3-phosphoethanolamine + (9Z,12Z)-octadecadienoate + H(+). It catalyses the reaction 1-hexadecanoyl-2-(5Z,8Z,11Z,14Z-eicosatetraenoyl)-sn-glycero-3-phosphoethanolamine + H2O = 1-hexadecanoyl-sn-glycero-3-phosphoethanolamine + (5Z,8Z,11Z,14Z)-eicosatetraenoate + H(+). It carries out the reaction 1-octadecanoyl-2-(5Z,8Z,11Z,14Z-eicosatetraenoyl)-sn-glycero-3-phospho-(1D-myo-inositol) + H2O = 1-octadecanoyl-sn-glycero-3-phospho-(1D-myo-inositol) + (5Z,8Z,11Z,14Z)-eicosatetraenoate + H(+). The catalysed reaction is 1-hexadecanoyl-2-(9Z-octadecenoyl)-sn-glycero-3-phosphoglycerol + H2O = 1-hexadecanoyl-sn-glycero-3-phosphoglycerol + (9Z)-octadecenoate + H(+). The enzyme catalyses N-hexadecanoyl-1,2-di-(9Z-octadecenoyl)-sn-glycero-3-phosphoethanolamine + H2O = N-hexadecanoyl-1-(9Z-octadecenoyl)-sn-glycero-3-phosphoethanolamine + (9Z)-octadecenoate + H(+). It catalyses the reaction 1'-[1,2-di-(9Z-octadecenoyl)-sn-glycero-3-phospho]-3'-[1-(9Z-octadecenoyl)-sn-glycero-3-phospho]-glycerol + H2O = 1',3'-bis-[1-(9Z-octadecenoyl)-sn-glycero-3-phospho]-glycerol + (9Z)-octadecenoate + H(+). It carries out the reaction 1',3'-bis[1,2-di-(9Z-octadecenoyl)-sn-glycero-3-phospho]-glycerol + H2O = 1'-[1,2-di-(9Z-octadecenoyl)-sn-glycero-3-phospho]-3'-[1-(9Z-octadecenoyl)-sn-glycero-3-phospho]-glycerol + (9Z)-octadecenoate + H(+). It participates in lipid metabolism; phospholipid metabolism. It functions in the pathway lipid metabolism; leukotriene B4 biosynthesis. Its pathway is lipid metabolism; leukotriene C4 biosynthesis. With respect to regulation, activated by cardiolipin. Secretory calcium-dependent phospholipase A2 that primarily targets extracellular phospholipids. Hydrolyzes the ester bond of the fatty acyl group attached at sn-2 position of phospholipids (phospholipase A2 activity), preferentially releasing fatty acyl groups with a low degree of unsaturation such as oleoyl (C18:1) and linoleoyl (C18:2) groups. Hydrolyzes low-density lipoprotein (LDL) phospholipids releasing unsaturated fatty acids that drive macrophage polarization toward an M2 phenotype. May act in an autocrine and paracrine manner. Contributes to lipid remodeling of cellular membranes at different subcellular locations and generation of lipid mediators involved in pathogen clearance. Cleaves sn-2 fatty acyl chains of cardiolipin, a major component of the inner membrane of mitochondria and bacterial membranes. Promotes phagocytosis of bacteria in macrophages through production of lysophosphatidylethanolamines. Displays bactericidal activity against Gram-positive bacteria by directly hydrolyzing phospholipids of the bacterial membrane. Promotes phagocytosis and killing of ingested fungi likely through controlling phagosome-lysosome fusion and phagosome maturation. Plays a role in biosynthesis of cysteinyl leukotrienes (CysLTs) in myeloid cells. In eosinophils, triggers perinuclear arachidonate release and LTC4 synthesis in a PLA2G4A-independent way. In neutrophils, amplifies CysLTs biosynthesis initiated by PLA2G4A. Promotes immune complex clearance in macrophages via stimulating synthesis of CysLTs, which act through CYSLTR1 to trigger phagocytosis. May regulate antigen processing in antigen-presenting cells. In pulmonary macrophages regulates IL33 production required for activation of group 2 innate lymphoid cells. May play a role in the biosynthesis of N-acyl ethanolamines that regulate energy metabolism. Hydrolyzes N-acyl phosphatidylethanolamines to N-acyl lysophosphatidylethanolamines, which are further cleaved by a lysophospholipase D to release N-acyl ethanolamines. This Homo sapiens (Human) protein is Phospholipase A2 group V (PLA2G5).